Here is a 382-residue protein sequence, read N- to C-terminus: Putative glutamate--cysteine ligase 2-1 (382 aa).

Belongs to the glutamate--cysteine ligase type 2 family. YbdK subfamily.

It carries out the reaction L-cysteine + L-glutamate + ATP = gamma-L-glutamyl-L-cysteine + ADP + phosphate + H(+). Functionally, ATP-dependent carboxylate-amine ligase which exhibits weak glutamate--cysteine ligase activity. The chain is Putative glutamate--cysteine ligase 2-1 from Nocardioides sp. (strain ATCC BAA-499 / JS614).